The following is a 299-amino-acid chain: Glycerol-3-phosphate dehydrogenase [NAD(P)+] (299 aa).

Positions 11, 30, 31, and 79 each coordinate NADPH. 3 residues coordinate sn-glycerol 3-phosphate: lysine 79, glycine 107, and serine 109. Residue alanine 111 coordinates NADPH. 5 residues coordinate sn-glycerol 3-phosphate: lysine 161, aspartate 214, serine 224, arginine 225, and asparagine 226. Lysine 161 serves as the catalytic Proton acceptor. Arginine 225 contacts NADPH. Positions 249 and 251 each coordinate NADPH.

The protein belongs to the NAD-dependent glycerol-3-phosphate dehydrogenase family.

It is found in the cytoplasm. The catalysed reaction is sn-glycerol 3-phosphate + NAD(+) = dihydroxyacetone phosphate + NADH + H(+). It catalyses the reaction sn-glycerol 3-phosphate + NADP(+) = dihydroxyacetone phosphate + NADPH + H(+). The protein operates within membrane lipid metabolism; glycerophospholipid metabolism. In terms of biological role, catalyzes the reduction of the glycolytic intermediate dihydroxyacetone phosphate (DHAP) to sn-glycerol 3-phosphate (G3P), the key precursor for phospholipid synthesis. In Nitratiruptor sp. (strain SB155-2), this protein is Glycerol-3-phosphate dehydrogenase [NAD(P)+].